The sequence spans 952 residues: Protein translocase subunit SecA (952 aa).

ATP contacts are provided by residues glutamine 135, 153-157 (GEGKT), and aspartate 575. Low complexity predominate over residues 916–930 (VSAKAATQPAAPAAK). Positions 916–952 (VSAKAATQPAAPAAKEVGRNDPCPCGSGKKYKKCCGK) are disordered. Zn(2+) contacts are provided by cysteine 938, cysteine 940, cysteine 949, and cysteine 950.

It belongs to the SecA family. As to quaternary structure, monomer and homodimer. Part of the essential Sec protein translocation apparatus which comprises SecA, SecYEG and auxiliary proteins SecDF. Other proteins may also be involved. The cofactor is Zn(2+).

The protein resides in the cell membrane. It localises to the cytoplasm. It catalyses the reaction ATP + H2O + cellular proteinSide 1 = ADP + phosphate + cellular proteinSide 2.. In terms of biological role, part of the Sec protein translocase complex. Interacts with the SecYEG preprotein conducting channel. Has a central role in coupling the hydrolysis of ATP to the transfer of proteins into and across the cell membrane, serving as an ATP-driven molecular motor driving the stepwise translocation of polypeptide chains across the membrane. The chain is Protein translocase subunit SecA from Dehalococcoides mccartyi (strain ATCC BAA-2266 / KCTC 15142 / 195) (Dehalococcoides ethenogenes (strain 195)).